The chain runs to 149 residues: UPF0178 protein VV1_1847 (149 aa).

The protein belongs to the UPF0178 family.

This Vibrio vulnificus (strain CMCP6) protein is UPF0178 protein VV1_1847.